Consider the following 182-residue polypeptide: Kappa-casein (182 aa).

An N-terminal signal peptide occupies residues 1–20 (MKSFLLVVNALALTLPFLAV). Thr-133, Thr-143, Thr-148, and Thr-151 each carry an O-linked (GalNAc...) threonine glycan. Position 157 is a phosphothreonine; alternate (Thr-157). A glycan (O-linked (GalNAc...) threonine; alternate) is linked at Thr-157. Thr-167, Thr-169, and Thr-178 each carry an O-linked (GalNAc...) threonine glycan.

Belongs to the kappa-casein family. Heteromultimers composed of alpha-s1 casein and kappa casein linked by disulfide bonds. In terms of processing, the N-terminus is blocked. Mammary gland specific. Secreted in milk.

The protein resides in the secreted. Functionally, kappa-casein stabilizes micelle formation, preventing casein precipitation in milk. The chain is Kappa-casein (CSN3) from Homo sapiens (Human).